An 863-amino-acid chain; its full sequence is DNA mismatch repair protein MutS (863 aa).

615–622 (GPNMAGKS) serves as a coordination point for ATP.

This sequence belongs to the DNA mismatch repair MutS family.

Its function is as follows. This protein is involved in the repair of mismatches in DNA. It is possible that it carries out the mismatch recognition step. This protein has a weak ATPase activity. In Pelotomaculum thermopropionicum (strain DSM 13744 / JCM 10971 / SI), this protein is DNA mismatch repair protein MutS.